The chain runs to 135 residues: Small ribosomal subunit protein uS11 (135 aa).

The interval 1–22 is disordered; sequence MPPKSRTAAGAKKVRRKEKKNV.

Belongs to the universal ribosomal protein uS11 family. In terms of assembly, part of the 30S ribosomal subunit. Interacts with proteins S7 and S18. Binds to IF-3.

Functionally, located on the platform of the 30S subunit, it bridges several disparate RNA helices of the 16S rRNA. Forms part of the Shine-Dalgarno cleft in the 70S ribosome. This Nocardioides sp. (strain ATCC BAA-499 / JS614) protein is Small ribosomal subunit protein uS11.